We begin with the raw amino-acid sequence, 209 residues long: Uracil phosphoribosyltransferase (209 aa).

5-phospho-alpha-D-ribose 1-diphosphate-binding positions include Arg-79, Arg-104, and 131–139 (DPMLATGNS). Uracil-binding positions include Ile-194 and 199-201 (GDA). Asp-200 contributes to the 5-phospho-alpha-D-ribose 1-diphosphate binding site.

It belongs to the UPRTase family. Mg(2+) is required as a cofactor.

It catalyses the reaction UMP + diphosphate = 5-phospho-alpha-D-ribose 1-diphosphate + uracil. Its pathway is pyrimidine metabolism; UMP biosynthesis via salvage pathway; UMP from uracil: step 1/1. Allosterically activated by GTP. Its function is as follows. Catalyzes the conversion of uracil and 5-phospho-alpha-D-ribose 1-diphosphate (PRPP) to UMP and diphosphate. The protein is Uracil phosphoribosyltransferase of Sinorhizobium medicae (strain WSM419) (Ensifer medicae).